Reading from the N-terminus, the 129-residue chain is Glycine cleavage system H protein (129 aa).

The region spanning 24–106 (TYTVGITEHA…YAGGWIFKIK (83 aa)) is the Lipoyl-binding domain. Position 65 is an N6-lipoyllysine (K65).

Belongs to the GcvH family. As to quaternary structure, the glycine cleavage system is composed of four proteins: P, T, L and H. It depends on (R)-lipoate as a cofactor.

Its function is as follows. The glycine cleavage system catalyzes the degradation of glycine. The H protein shuttles the methylamine group of glycine from the P protein to the T protein. The polypeptide is Glycine cleavage system H protein (Escherichia coli O139:H28 (strain E24377A / ETEC)).